The following is a 217-amino-acid chain: Guanylate kinase (217 aa).

Residues 10–190 (GLLIILSSPS…TEEALKTIIT (181 aa)) enclose the Guanylate kinase-like domain. An ATP-binding site is contributed by 17-24 (SPSGAGKS).

This sequence belongs to the guanylate kinase family.

It localises to the cytoplasm. The enzyme catalyses GMP + ATP = GDP + ADP. Essential for recycling GMP and indirectly, cGMP. The sequence is that of Guanylate kinase from Ruegeria sp. (strain TM1040) (Silicibacter sp.).